Here is a 911-residue protein sequence, read N- to C-terminus: Beta-galactosidase 12 (911 aa).

A signal peptide spans 1-25 (MAARVAAAVAAALLAAALLLPGAAA). Glutamate 192 (proton donor) is an active-site residue. The Nucleophile role is filled by glutamate 262. Residues asparagine 263, asparagine 389, asparagine 473, and asparagine 777 are each glycosylated (N-linked (GlcNAc...) asparagine). In terms of domain architecture, SUEL-type lectin spans 744 to 831 (EDTSTRGTLN…ATLAVQLLLA (88 aa)).

It belongs to the glycosyl hydrolase 35 family.

The protein localises to the secreted. The protein resides in the extracellular space. Its subcellular location is the apoplast. The catalysed reaction is Hydrolysis of terminal non-reducing beta-D-galactose residues in beta-D-galactosides.. The polypeptide is Beta-galactosidase 12 (Oryza sativa subsp. japonica (Rice)).